The primary structure comprises 178 residues: MSRIGKQPVSIPDKVKVSVKDGTVFVEGPKGRVQKTFAPAVKVTVADKQVTFAPTEESRFAKAMYGTARSIVAGMVKGVTEGYTKDLEIQGVGFKANLKGKQLDLALGYSHPILLDIPEGIKITVTDQTKVRVEGADKQLVGAVTAEIRGYYPPEPYKGKGVRIVGERVRRKEGKTVA.

The protein belongs to the universal ribosomal protein uL6 family. Part of the 50S ribosomal subunit.

Its function is as follows. This protein binds to the 23S rRNA, and is important in its secondary structure. It is located near the subunit interface in the base of the L7/L12 stalk, and near the tRNA binding site of the peptidyltransferase center. The sequence is that of Large ribosomal subunit protein uL6 from Opitutus terrae (strain DSM 11246 / JCM 15787 / PB90-1).